Consider the following 94-residue polypeptide: DNA-directed RNA polymerase subunit Rpo11 (94 aa).

This sequence belongs to the archaeal Rpo11/eukaryotic RPB11/RPC19 RNA polymerase subunit family. In terms of assembly, part of the RNA polymerase complex.

The protein localises to the cytoplasm. It carries out the reaction RNA(n) + a ribonucleoside 5'-triphosphate = RNA(n+1) + diphosphate. In terms of biological role, DNA-dependent RNA polymerase (RNAP) catalyzes the transcription of DNA into RNA using the four ribonucleoside triphosphates as substrates. The sequence is that of DNA-directed RNA polymerase subunit Rpo11 from Thermococcus kodakarensis (strain ATCC BAA-918 / JCM 12380 / KOD1) (Pyrococcus kodakaraensis (strain KOD1)).